Consider the following 160-residue polypeptide: NADH-quinone oxidoreductase subunit B (160 aa).

[4Fe-4S] cluster-binding residues include C37, C38, C102, and C132.

Belongs to the complex I 20 kDa subunit family. As to quaternary structure, NDH-1 is composed of 14 different subunits. Subunits NuoB, C, D, E, F, and G constitute the peripheral sector of the complex. [4Fe-4S] cluster serves as cofactor.

Its subcellular location is the cell inner membrane. The enzyme catalyses a quinone + NADH + 5 H(+)(in) = a quinol + NAD(+) + 4 H(+)(out). In terms of biological role, NDH-1 shuttles electrons from NADH, via FMN and iron-sulfur (Fe-S) centers, to quinones in the respiratory chain. Couples the redox reaction to proton translocation (for every two electrons transferred, four hydrogen ions are translocated across the cytoplasmic membrane), and thus conserves the redox energy in a proton gradient. This chain is NADH-quinone oxidoreductase subunit B, found in Cupriavidus metallidurans (strain ATCC 43123 / DSM 2839 / NBRC 102507 / CH34) (Ralstonia metallidurans).